We begin with the raw amino-acid sequence, 595 residues long: Elongation factor 4 2 (595 aa).

The region spanning 4–187 (SHIRNFAIIA…AIKQRLPAPQ (184 aa)) is the tr-type G domain. Residues 16–21 (DHGKST) and 133–136 (NKVD) contribute to the GTP site.

Belongs to the TRAFAC class translation factor GTPase superfamily. Classic translation factor GTPase family. LepA subfamily.

It localises to the cell membrane. The enzyme catalyses GTP + H2O = GDP + phosphate + H(+). In terms of biological role, required for accurate and efficient protein synthesis under certain stress conditions. May act as a fidelity factor of the translation reaction, by catalyzing a one-codon backward translocation of tRNAs on improperly translocated ribosomes. Back-translocation proceeds from a post-translocation (POST) complex to a pre-translocation (PRE) complex, thus giving elongation factor G a second chance to translocate the tRNAs correctly. Binds to ribosomes in a GTP-dependent manner. The chain is Elongation factor 4 2 from Lactiplantibacillus plantarum (strain ATCC BAA-793 / NCIMB 8826 / WCFS1) (Lactobacillus plantarum).